A 199-amino-acid chain; its full sequence is Crossover junction endodeoxyribonuclease RuvC (199 aa).

Active-site residues include aspartate 17, glutamate 76, and aspartate 148. Mg(2+) contacts are provided by aspartate 17, glutamate 76, and aspartate 148.

The protein belongs to the RuvC family. Homodimer which binds Holliday junction (HJ) DNA. The HJ becomes 2-fold symmetrical on binding to RuvC with unstacked arms; it has a different conformation from HJ DNA in complex with RuvA. In the full resolvosome a probable DNA-RuvA(4)-RuvB(12)-RuvC(2) complex forms which resolves the HJ. The cofactor is Mg(2+).

It is found in the cytoplasm. The enzyme catalyses Endonucleolytic cleavage at a junction such as a reciprocal single-stranded crossover between two homologous DNA duplexes (Holliday junction).. The RuvA-RuvB-RuvC complex processes Holliday junction (HJ) DNA during genetic recombination and DNA repair. Endonuclease that resolves HJ intermediates. Cleaves cruciform DNA by making single-stranded nicks across the HJ at symmetrical positions within the homologous arms, yielding a 5'-phosphate and a 3'-hydroxyl group; requires a central core of homology in the junction. The consensus cleavage sequence is 5'-(A/T)TT(C/G)-3'. Cleavage occurs on the 3'-side of the TT dinucleotide at the point of strand exchange. HJ branch migration catalyzed by RuvA-RuvB allows RuvC to scan DNA until it finds its consensus sequence, where it cleaves and resolves the cruciform DNA. The protein is Crossover junction endodeoxyribonuclease RuvC of Mannheimia succiniciproducens (strain KCTC 0769BP / MBEL55E).